Consider the following 354-residue polypeptide: MIDWITSQGQGVLGAYWTPLWILIRAVIIVVPLLLCVAYLILWERKLIGWMHVRIGPNRVGPLGLLQPIADVLKLLLKEVMMPTQVSRGMYLIAPLMVLMPAVAIWAVIPFQAEVVMADVNAGLLYVMAISSVGVYGVILAGWASNSKYAFIGAMRAAAQMVSYEIAMGFALVTVLMVAGSLNLSAIVNGQNTGYFADMGINILSWNWLPLLPMFGVYFISGVAETNRHPFDVVEGESEIVAGHMIEYSGMGFALFFLAEYINMIIISTMTALMFLGGWAPPFESVVTNAIPGFFWLLIKVFLLLSVFIWIRASFPRYRYDQIMRLGWKVFIPLTVAWLIIVAIWIKSPWNIWH.

8 consecutive transmembrane segments (helical) span residues 22 to 42 (ILIR…YLIL), 91 to 111 (YLIA…VIPF), 124 to 144 (LLYV…AGWA), 168 to 188 (MGFA…SAIV), 203 to 223 (ILSW…ISGV), 255 to 275 (LFFL…ALMF), 291 to 311 (IPGF…FIWI), and 326 to 346 (LGWK…AIWI).

This sequence belongs to the complex I subunit 1 family. As to quaternary structure, NDH-1 is composed of 14 different subunits. Subunits NuoA, H, J, K, L, M, N constitute the membrane sector of the complex.

Its subcellular location is the cell inner membrane. It carries out the reaction a quinone + NADH + 5 H(+)(in) = a quinol + NAD(+) + 4 H(+)(out). In terms of biological role, NDH-1 shuttles electrons from NADH, via FMN and iron-sulfur (Fe-S) centers, to quinones in the respiratory chain. The immediate electron acceptor for the enzyme in this species is believed to be ubiquinone. Couples the redox reaction to proton translocation (for every two electrons transferred, four hydrogen ions are translocated across the cytoplasmic membrane), and thus conserves the redox energy in a proton gradient. This subunit may bind ubiquinone. This is NADH-quinone oxidoreductase subunit H from Cupriavidus taiwanensis (strain DSM 17343 / BCRC 17206 / CCUG 44338 / CIP 107171 / LMG 19424 / R1) (Ralstonia taiwanensis (strain LMG 19424)).